A 280-amino-acid chain; its full sequence is DegV domain-containing protein M6_Spy1440 (280 aa).

The DegV domain occupies 3 to 280 (WKIVTDSGCD…DGGLLMGYEI (278 aa)). Hexadecanoate-binding residues include Ser-63 and Ser-91.

In terms of biological role, may bind long-chain fatty acids, such as palmitate, and may play a role in lipid transport or fatty acid metabolism. The sequence is that of DegV domain-containing protein M6_Spy1440 from Streptococcus pyogenes serotype M6 (strain ATCC BAA-946 / MGAS10394).